Reading from the N-terminus, the 186-residue chain is DNA damage up-regulated protein (186 aa).

The interval 147–166 (ATENGEGCRPARDPASSPSS) is disordered.

In terms of assembly, interacts with DNA damage response proteins ATR, H2AX, PCNA, RAD18 and RAD51C. Forms a complex with H2AX and RAD18 following DDUP phosphorylation. Phosphorylated in an ATR-dependent manner; phosphorylation is required for interaction with H2AX and RAD18 and for DDUP-mediated DNA damage repair.

The protein localises to the nucleus. It is found in the chromosome. Functionally, promotes DNA damage repair through both homologous recombination repair (HRR) and post-replication repair (PRR) mechanisms. Enhances the retention of DNA damage response protein RAD18 at sites of DNA damage. This allows for HRR via association of RAD18 with RAD51C and for PRR via RAD18-mediated promotion of PCNA monoubiquitination. The sequence is that of DNA damage up-regulated protein from Homo sapiens (Human).